The chain runs to 171 residues: 3-hydroxydecanoyl-[acyl-carrier-protein] dehydratase (171 aa).

The active site involves His-70.

This sequence belongs to the thioester dehydratase family. FabA subfamily. In terms of assembly, homodimer.

It localises to the cytoplasm. The catalysed reaction is a (3R)-hydroxyacyl-[ACP] = a (2E)-enoyl-[ACP] + H2O. It catalyses the reaction (3R)-hydroxydecanoyl-[ACP] = (2E)-decenoyl-[ACP] + H2O. It carries out the reaction (2E)-decenoyl-[ACP] = (3Z)-decenoyl-[ACP]. Its pathway is lipid metabolism; fatty acid biosynthesis. Functionally, necessary for the introduction of cis unsaturation into fatty acids. Catalyzes the dehydration of (3R)-3-hydroxydecanoyl-ACP to E-(2)-decenoyl-ACP and then its isomerization to Z-(3)-decenoyl-ACP. Can catalyze the dehydratase reaction for beta-hydroxyacyl-ACPs with saturated chain lengths up to 16:0, being most active on intermediate chain length. The polypeptide is 3-hydroxydecanoyl-[acyl-carrier-protein] dehydratase (Colwellia psychrerythraea (strain 34H / ATCC BAA-681) (Vibrio psychroerythus)).